The primary structure comprises 574 residues: M-phase inducer phosphatase 2 (574 aa).

Disordered stretches follow at residues 31 to 51 and 90 to 110; these read GFGF…SSSP and RRTS…AGLC. Ser-42 carries the post-translational modification Phosphoserine. The segment covering 90 to 105 has biased composition (low complexity); it reads RRTSECSLSSESSESS. Position 166 is a phosphoserine; by MELK (Ser-166). At Ser-246 the chain carries Phosphoserine. At Ser-319 the chain carries Phosphoserine; by MAPKAPK2 and MELK. Ser-319 is modified (phosphoserine; by MELK and MAPK14). A disordered region spans residues 339 to 359; it reads DVPVLSKRRKSGTPLEEQQLE. Ser-349 carries the post-translational modification Phosphoserine; by AURKA. Ser-370 carries the post-translational modification Phosphoserine; by BRSK1 and MAPK14. The region spanning 425–532 is the Rhodanese domain; the sequence is IVEKFVIVDC…FFPQHPNFCE (108 aa). The active site involves Cys-481. Phosphoserine is present on Ser-557.

The protein belongs to the MPI phosphatase family. Interacts with MAPK14 and 14-3-3 proteins. Post-translationally, phosphorylated by BRSK1 in vitro. Phosphorylated by CHEK1, which inhibits the activity of this protein. Phosphorylation at Ser-349 by AURKA might locally participate in the control of the onset of mitosis. Phosphorylation by MELK at Ser-166 promotes localization to the centrosome and the spindle poles during mitosis. Phosphorylation at Ser-319 and Ser-370 by MAPK14 is required for binding to 14-3-3 proteins.

Its subcellular location is the cytoplasm. It localises to the cytoskeleton. The protein localises to the microtubule organizing center. The protein resides in the centrosome. It is found in the spindle pole. The enzyme catalyses O-phospho-L-tyrosyl-[protein] + H2O = L-tyrosyl-[protein] + phosphate. Stimulated by B-type cyclins. Its function is as follows. Tyrosine protein phosphatase which functions as a dosage-dependent inducer of mitotic progression. Directly dephosphorylates CDK1 and stimulates its kinase activity. Required for G2/M phases of the cell cycle progression and abscission during cytokinesis in a ECT2-dependent manner. The three isoforms seem to have a different level of activity. The polypeptide is M-phase inducer phosphatase 2 (Cdc25b) (Rattus norvegicus (Rat)).